Consider the following 106-residue polypeptide: MSVSAIFGTGIVTVAASPVLRQFQVPKLGNGGGLGMVIECSSRPQKKSTAHHRKTRPKKTQPWDIKRKPTVYAPLPPLPAEWSPFTLASDDGGAATAAGDLVSGAA.

Residues 1 to 39 (MSVSAIFGTGIVTVAASPVLRQFQVPKLGNGGGLGMVIE) constitute a chloroplast transit peptide. Residues 42–70 (SRPQKKSTAHHRKTRPKKTQPWDIKRKPT) are disordered. Basic residues predominate over residues 44–59 (PQKKSTAHHRKTRPKK).

This sequence belongs to the chloroplast-specific ribosomal protein cL38 family. In terms of assembly, part of the 50S ribosomal subunit.

It is found in the plastid. Its subcellular location is the chloroplast. This Arabidopsis thaliana (Mouse-ear cress) protein is Large ribosomal subunit protein cL38 (PSRP6).